A 331-amino-acid polypeptide reads, in one-letter code: Light-harvesting complex I LH35 proteins (331 aa).

The protein localises to the plastid. It localises to the chloroplast. The chain is Light-harvesting complex I LH35 proteins from Euglena gracilis.